The primary structure comprises 275 residues: Large ribosomal subunit protein uL2c (275 aa).

A disordered region spans residues 225-249; that stretch reads PVDHPHGGGEGRAPIGRKKPTTPWG.

It belongs to the universal ribosomal protein uL2 family. Part of the 50S ribosomal subunit.

Its subcellular location is the plastid. The polypeptide is Large ribosomal subunit protein uL2c (rpl2) (Cuscuta reflexa (Southern Asian dodder)).